Consider the following 466-residue polypeptide: Endoglucanase E-5 (466 aa).

The N-terminal stretch at 1–36 is a signal peptide; it reads MAKSPAARKGXPPVAVAVTAALALLIALLSPGVAQA. The CBM2 domain occupies 37 to 139; that stretch reads AGLTATVTKE…TINGAPCDEG (103 aa). Residues 129–166 form a disordered region; it reads CTINGAPCDEGSEPGGPGGPGTPSPDPGTQPGTGTPVE. The active-site Proton donor is Glu299. The active-site Nucleophile is Glu391.

It belongs to the glycosyl hydrolase 5 (cellulase A) family.

The catalysed reaction is Endohydrolysis of (1-&gt;4)-beta-D-glucosidic linkages in cellulose, lichenin and cereal beta-D-glucans.. It functions in the pathway glycan metabolism; cellulose degradation. The polypeptide is Endoglucanase E-5 (celE) (Thermobifida fusca (Thermomonospora fusca)).